Consider the following 901-residue polypeptide: Protein translocase subunit SecA (901 aa).

ATP-binding positions include Q87, 105 to 109, and D512; that span reads GEGKT. The Zn(2+) site is built by C885, C887, C896, and H897.

Belongs to the SecA family. In terms of assembly, monomer and homodimer. Part of the essential Sec protein translocation apparatus which comprises SecA, SecYEG and auxiliary proteins SecDF-YajC and YidC. It depends on Zn(2+) as a cofactor.

The protein localises to the cell inner membrane. The protein resides in the cytoplasm. It carries out the reaction ATP + H2O + cellular proteinSide 1 = ADP + phosphate + cellular proteinSide 2.. Functionally, part of the Sec protein translocase complex. Interacts with the SecYEG preprotein conducting channel. Has a central role in coupling the hydrolysis of ATP to the transfer of proteins into and across the cell membrane, serving both as a receptor for the preprotein-SecB complex and as an ATP-driven molecular motor driving the stepwise translocation of polypeptide chains across the membrane. The protein is Protein translocase subunit SecA of Salmonella paratyphi A (strain ATCC 9150 / SARB42).